Consider the following 597-residue polypeptide: (E)-sabinene hydrate synthase, chloroplastic (597 aa).

Residues 1-47 (MSTISINHVGILRNPLQCKNKRTSINKPWSLSLPRSSPASRLVKPCR) constitute a chloroplast transit peptide. Mn(2+)-binding residues include Asp353 and Asp357. A DDXXD motif motif is present at residues 353–357 (DDVYD). 2 homodimerization regions span residues 359–365 (YGTLDEL) and 431–468 (EAGW…VSLP). Positions 495 and 503 each coordinate Mn(2+).

This sequence belongs to the terpene synthase family. In terms of assembly, homodimer. The cofactor is Mn(2+). Mg(2+) is required as a cofactor.

Its subcellular location is the plastid. It localises to the chloroplast. It carries out the reaction (2E)-geranyl diphosphate + H2O = sabinene hydrate + diphosphate. The protein operates within secondary metabolite biosynthesis; terpenoid biosynthesis. In terms of biological role, involved in the biosynthesis of phenolic monoterpenes natural products. Monoterpene synthase which catalyzes the conversion of geranyl diphosphate (GPP) to sabinene hydrate, specifically (E)-sabinene hydrate, and the formation of minor amounts and traces of several other monoterpenes (e.g. mainly alpha-pinene, limonene and alpha-terpineol). This is (E)-sabinene hydrate synthase, chloroplastic from Thymus vulgaris (Thyme).